Consider the following 315-residue polypeptide: Methionyl-tRNA formyltransferase (315 aa).

The tract at residues Ser-2 to Asp-189 is N-terminal domain. Residue Ser-113–Pro-116 participates in (6S)-5,6,7,8-tetrahydrofolate binding. A C-terminal domain region spans residues Lys-210–Ala-315.

It belongs to the Fmt family.

It catalyses the reaction L-methionyl-tRNA(fMet) + (6R)-10-formyltetrahydrofolate = N-formyl-L-methionyl-tRNA(fMet) + (6S)-5,6,7,8-tetrahydrofolate + H(+). Its function is as follows. Attaches a formyl group to the free amino group of methionyl-tRNA(fMet). The formyl group appears to play a dual role in the initiator identity of N-formylmethionyl-tRNA by promoting its recognition by IF2 and preventing the misappropriation of this tRNA by the elongation apparatus. This Salmonella typhi protein is Methionyl-tRNA formyltransferase.